We begin with the raw amino-acid sequence, 933 residues long: Isoleucine--tRNA ligase (933 aa).

A 'HIGH' region motif is present at residues 57-67; it reads PYANGNIHVGH. E554 contacts L-isoleucyl-5'-AMP. Positions 595 to 599 match the 'KMSKS' region motif; it reads KMSKS. ATP is bound at residue K598.

This sequence belongs to the class-I aminoacyl-tRNA synthetase family. IleS type 1 subfamily. Monomer.

Its subcellular location is the cytoplasm. It carries out the reaction tRNA(Ile) + L-isoleucine + ATP = L-isoleucyl-tRNA(Ile) + AMP + diphosphate. Functionally, catalyzes the attachment of isoleucine to tRNA(Ile). As IleRS can inadvertently accommodate and process structurally similar amino acids such as valine, to avoid such errors it has two additional distinct tRNA(Ile)-dependent editing activities. One activity is designated as 'pretransfer' editing and involves the hydrolysis of activated Val-AMP. The other activity is designated 'posttransfer' editing and involves deacylation of mischarged Val-tRNA(Ile). This Streptococcus pyogenes serotype M1 protein is Isoleucine--tRNA ligase.